The following is a 71-amino-acid chain: Omega-conotoxin-like Ac6.4 (71 aa).

The signal sequence occupies residues 1–22; the sequence is MKLTCVVIVAVLLLTACQLLTA. Residues 23 to 45 constitute a propeptide that is removed on maturation; sequence DDSRGTQKHRALRSDTKLSMSTR. 3 cysteine pairs are disulfide-bonded: C46–C61, C53–C65, and C60–C70. Position 70 is a cysteine amide (C70).

Belongs to the conotoxin O1 superfamily. In terms of tissue distribution, expressed by the venom duct.

Its subcellular location is the secreted. Omega-conotoxins act at presynaptic membranes, they bind and block voltage-gated calcium channels (Cav). This is Omega-conotoxin-like Ac6.4 from Conus achatinus (Little frog cone).